A 302-amino-acid polypeptide reads, in one-letter code: MSKEIALTLDSRKRLGSTYLKLTKPKVVALMLVTAIVGMSLAPVTDFPWIQASIGLIGIGLMAGSAAAFNHLIDRRIDARMARTHTRPLPSGDTNPLSVAIFAVAIGVVGFVLLYAWVNELTAWMTFLSLLGYAVVYTMYLKRATPQNIVIAGIAGAMPPLLGWTAVTGELHGNAWLLVMIIFIWTPPHFWALAIHRVEDYRKVDIPMLPVTHGIEYTKTSILLYTVLLTLVCVMPVLVGMVGFIYLFSALLLNAGFIYHAWKLKFAPEPNSAIETFKFSIYHLLALFVALLADHYIGMVLQ.

Helical transmembrane passes span 27–47 (VVAL…VTDF), 49–69 (WIQA…AAAF), 98–118 (SVAI…YAWV), 121–141 (LTAW…TMYL), 149–169 (IVIA…AVTG), 175–195 (AWLL…ALAI), 228–248 (LLTL…IYLF), and 281–301 (IYHL…GMVL).

The protein belongs to the UbiA prenyltransferase family. Protoheme IX farnesyltransferase subfamily.

Its subcellular location is the cell inner membrane. The enzyme catalyses heme b + (2E,6E)-farnesyl diphosphate + H2O = Fe(II)-heme o + diphosphate. It functions in the pathway porphyrin-containing compound metabolism; heme O biosynthesis; heme O from protoheme: step 1/1. In terms of biological role, converts heme B (protoheme IX) to heme O by substitution of the vinyl group on carbon 2 of heme B porphyrin ring with a hydroxyethyl farnesyl side group. In Vibrio parahaemolyticus serotype O3:K6 (strain RIMD 2210633), this protein is Protoheme IX farnesyltransferase 1.